The primary structure comprises 490 residues: 23S rRNA (uracil(1939)-C(5))-methyltransferase RlmD (490 aa).

The TRAM domain maps to 14–75 (APAPAEYPID…SSFEKATLTA (62 aa)). The [4Fe-4S] cluster site is built by Cys-88, Cys-98, Cys-101, and Cys-180. S-adenosyl-L-methionine contacts are provided by Gln-289, Phe-318, Asn-323, Glu-339, Asn-374, and Asp-395. The Nucleophile role is filled by Cys-446.

This sequence belongs to the class I-like SAM-binding methyltransferase superfamily. RNA M5U methyltransferase family. RlmD subfamily.

The catalysed reaction is uridine(1939) in 23S rRNA + S-adenosyl-L-methionine = 5-methyluridine(1939) in 23S rRNA + S-adenosyl-L-homocysteine + H(+). In terms of biological role, catalyzes the formation of 5-methyl-uridine at position 1939 (m5U1939) in 23S rRNA. The protein is 23S rRNA (uracil(1939)-C(5))-methyltransferase RlmD of Polaromonas naphthalenivorans (strain CJ2).